Here is a 380-residue protein sequence, read N- to C-terminus: Geranylgeranyl pyrophosphate synthase cle6 (380 aa).

Residues 1-19 (MHSVRTSTTSTSSMVSSTM) show a composition bias toward low complexity. The interval 1-55 (MHSVRTSTTSTSSMVSSTMHPFDAFNAPQPYQQHHPPRWNIHNPHFSQTNGHSIQ) is disordered. Positions 45-55 (HFSQTNGHSIQ) are enriched in polar residues. Lys-102, Arg-105, and His-134 together coordinate isopentenyl diphosphate. The Mg(2+) site is built by Asp-141 and Asp-145. Position 150 (Arg-150) interacts with dimethylallyl diphosphate. Residue Arg-151 participates in isopentenyl diphosphate binding. Lys-229, Thr-230, and Gln-263 together coordinate dimethylallyl diphosphate. Asp-266 is a Mg(2+) binding site. Positions 270, 280, and 290 each coordinate dimethylallyl diphosphate.

It belongs to the FPP/GGPP synthase family. The cofactor is Mg(2+).

The enzyme catalyses isopentenyl diphosphate + dimethylallyl diphosphate = (2E)-geranyl diphosphate + diphosphate. It carries out the reaction isopentenyl diphosphate + (2E)-geranyl diphosphate = (2E,6E)-farnesyl diphosphate + diphosphate. It catalyses the reaction isopentenyl diphosphate + (2E,6E)-farnesyl diphosphate = (2E,6E,10E)-geranylgeranyl diphosphate + diphosphate. Its pathway is secondary metabolite biosynthesis; terpenoid biosynthesis. In terms of biological role, geranylgeranyl pyrophosphate synthase; part of the cluster A that mediates the biosynthesis of chevalone E and its oxidized derivatives that possess a unique five-membered lactone ring and can synergistically enhance the cytotoxicity of doxorubicin (DOX) in breast cancer cells. Within the pathway, cle6 takes part to the biosynthesis of the molecular scaffold by providing geranylgeranyl pyrophosphate (GGPP) to the prenyltransferase cle5 for C-3 geranylgeranylation of triacetic acid lactone. The molecular scaffold is commonly biosynthesized by a series of enzymes including the non-reducing polyketide synthase (NR-PKS) cle1 that produces the alpha-pyrone triacetic acid lactone (TAL); The membrane-bound prenyltransferase cle5 that accepts TAL as its substrate to perform a C-3 geranylgeranylation reaction, in which the pathway-dedicated GGPS cle6 is required to provide GGPP, the other substrate of cle5; the FAD-dependent monooxygenase Cle3 that forms an (S)-epoxide ring at the terminal olefin of the geranylgeranyl group; and the terpene cyclase Cle7 that catalyzes the cyclization of the prenyl group that yields the pentacyclic pathway intermediate chevalone E. Chevalone E can derivatize into seven new oxidized analogs by the cytochrome P450 monooxygenases cle2 (acting at C-20) and cle4 (acting at C-11 and C-12). In Aspergillus versicolor, this protein is Geranylgeranyl pyrophosphate synthase cle6.